The chain runs to 103 residues: Small ribosomal subunit protein uS10 (103 aa).

Belongs to the universal ribosomal protein uS10 family. In terms of assembly, part of the 30S ribosomal subunit.

Involved in the binding of tRNA to the ribosomes. This Alkalilimnicola ehrlichii (strain ATCC BAA-1101 / DSM 17681 / MLHE-1) protein is Small ribosomal subunit protein uS10.